The sequence spans 327 residues: GTPase Obg (327 aa).

In terms of domain architecture, Obg spans His-2–Ile-160. Residues Ala-161 to Arg-326 form the OBG-type G domain. Residues Gly-167–Ser-174, Phe-192–Phe-196, Asp-213–Gly-216, Asn-280–Asp-283, and Ser-307–Tyr-309 each bind GTP. The Mg(2+) site is built by Ser-174 and Thr-194.

This sequence belongs to the TRAFAC class OBG-HflX-like GTPase superfamily. OBG GTPase family. In terms of assembly, monomer. The cofactor is Mg(2+).

The protein localises to the cytoplasm. Its function is as follows. An essential GTPase which binds GTP, GDP and possibly (p)ppGpp with moderate affinity, with high nucleotide exchange rates and a fairly low GTP hydrolysis rate. Plays a role in control of the cell cycle, stress response, ribosome biogenesis and in those bacteria that undergo differentiation, in morphogenesis control. The chain is GTPase Obg from Borrelia hermsii (strain HS1 / DAH).